The primary structure comprises 705 residues: Elongation factor G (705 aa).

The tr-type G domain maps to 8–290; sequence ERYRNFGIMA…GVVHLLPSPA (283 aa). GTP is bound by residues 17-24, 88-92, and 142-145; these read AHIDAGKT, DTPGH, and NKMD. The disordered stretch occupies residues 290 to 309; that stretch reads ADRPPVQGIDEDEKEDTRAA.

It belongs to the TRAFAC class translation factor GTPase superfamily. Classic translation factor GTPase family. EF-G/EF-2 subfamily.

Its subcellular location is the cytoplasm. Catalyzes the GTP-dependent ribosomal translocation step during translation elongation. During this step, the ribosome changes from the pre-translocational (PRE) to the post-translocational (POST) state as the newly formed A-site-bound peptidyl-tRNA and P-site-bound deacylated tRNA move to the P and E sites, respectively. Catalyzes the coordinated movement of the two tRNA molecules, the mRNA and conformational changes in the ribosome. The polypeptide is Elongation factor G (Xanthomonas oryzae pv. oryzae (strain MAFF 311018)).